The primary structure comprises 279 residues: Undecaprenyl-diphosphatase (279 aa).

The next 6 membrane-spanning stretches (helical) occupy residues 45–65 (FVEMFNIVIQLGAIMAVIVIY), 85–105 (WQLWLKVVIACIPSILIALPF), 113–133 (FNFMIPIAIALIFYGFVFIWV), 188–208 (SVAADFTFFLAIPTMFGYSGL), 226–246 (LILLVASLTAFVVSLYVIRFL), and 255–275 (FTIFGKYRIVLGSLLILYWLV).

This sequence belongs to the UppP family.

It localises to the cell membrane. It carries out the reaction di-trans,octa-cis-undecaprenyl diphosphate + H2O = di-trans,octa-cis-undecaprenyl phosphate + phosphate + H(+). Its function is as follows. Catalyzes the dephosphorylation of undecaprenyl diphosphate (UPP). Confers resistance to bacitracin. This chain is Undecaprenyl-diphosphatase, found in Streptococcus agalactiae serotype III (strain NEM316).